The sequence spans 102 residues: Large ribosomal subunit protein bL21 (102 aa).

Over residues 79–91 (RKDSKRKKGHRQP) the composition is skewed to basic residues. A disordered region spans residues 79 to 102 (RKDSKRKKGHRQPYTKLTIDKINA).

Belongs to the bacterial ribosomal protein bL21 family. In terms of assembly, part of the 50S ribosomal subunit. Contacts protein L20.

This protein binds to 23S rRNA in the presence of protein L20. This chain is Large ribosomal subunit protein bL21, found in Staphylococcus carnosus (strain TM300).